Here is a 101-residue protein sequence, read N- to C-terminus: MAKGQSLQDPFLNALRRERVPVSIYLVNGIKLQGQVESFDQFVILLKNTVSQMVYKHAISTVVPSRPVSHHSNNPSGSTNNYHGSNPSAPQQPQQDSDDAE.

The region spanning 9 to 68 (DPFLNALRRERVPVSIYLVNGIKLQGQVESFDQFVILLKNTVSQMVYKHAISTVVPSRPV) is the Sm domain. The interval 63–101 (VPSRPVSHHSNNPSGSTNNYHGSNPSAPQQPQQDSDDAE) is disordered. A compositionally biased stretch (polar residues) spans 70–86 (HHSNNPSGSTNNYHGSN).

This sequence belongs to the Hfq family. In terms of assembly, homohexamer.

In terms of biological role, RNA chaperone that binds small regulatory RNA (sRNAs) and mRNAs to facilitate mRNA translational regulation in response to envelope stress, environmental stress and changes in metabolite concentrations. Also binds with high specificity to tRNAs. Positively regulates the expression of the yst gene for heat-stable enterotoxin (Y-ST). In Yersinia enterocolitica, this protein is RNA-binding protein Hfq.